The chain runs to 509 residues: Maturase K (509 aa).

This sequence belongs to the intron maturase 2 family. MatK subfamily.

The protein resides in the plastid. It is found in the chloroplast. In terms of biological role, usually encoded in the trnK tRNA gene intron. Probably assists in splicing its own and other chloroplast group II introns. This chain is Maturase K, found in Vachellia farnesiana (Sweet acacia).